The sequence spans 134 residues: Ribosome-binding factor A (134 aa).

It belongs to the RbfA family. As to quaternary structure, monomer. Binds 30S ribosomal subunits, but not 50S ribosomal subunits or 70S ribosomes.

The protein resides in the cytoplasm. Its function is as follows. One of several proteins that assist in the late maturation steps of the functional core of the 30S ribosomal subunit. Associates with free 30S ribosomal subunits (but not with 30S subunits that are part of 70S ribosomes or polysomes). Required for efficient processing of 16S rRNA. May interact with the 5'-terminal helix region of 16S rRNA. This chain is Ribosome-binding factor A, found in Rhizobium leguminosarum bv. trifolii (strain WSM2304).